A 554-amino-acid chain; its full sequence is Urocanate hydratase (554 aa).

Residues 50-51 (GG), Gln-128, 174-176 (GMG), Glu-194, Arg-199, 240-241 (NA), 261-265 (QTSAH), 271-272 (YI), and Tyr-320 contribute to the NAD(+) site. Cys-408 is an active-site residue. Gly-490 is an NAD(+) binding site.

This sequence belongs to the urocanase family. NAD(+) serves as cofactor.

The protein resides in the cytoplasm. It catalyses the reaction 4-imidazolone-5-propanoate = trans-urocanate + H2O. The protein operates within amino-acid degradation; L-histidine degradation into L-glutamate; N-formimidoyl-L-glutamate from L-histidine: step 2/3. Functionally, catalyzes the conversion of urocanate to 4-imidazolone-5-propionate. In Rubrobacter xylanophilus (strain DSM 9941 / JCM 11954 / NBRC 16129 / PRD-1), this protein is Urocanate hydratase.